The primary structure comprises 108 residues: uncharacterized protein (108 aa).

N33 carries N-linked (GlcNAc...) asparagine glycosylation.

In terms of processing, N-glycosylated.

This is an uncharacterized protein from Saccharomyces cerevisiae (strain ATCC 204508 / S288c) (Baker's yeast).